A 648-amino-acid chain; its full sequence is Serine/threonine-protein kinase plk-1 (648 aa).

Residues 1 to 24 (MNRLPNIAKPPQKSNQRKEKAPPE) are disordered. The region spanning 38-289 (YEKGRFLGKG…AKQVQRDGFF (252 aa)) is the Protein kinase domain. Residues 44 to 52 (LGKGGFAHC) and Lys67 contribute to the ATP site. Asp161 functions as the Proton acceptor in the catalytic mechanism. POLO box domains are found at residues 412–492 (WISK…YMND) and 514–596 (TLRV…RLMS). A compositionally biased stretch (low complexity) spans 612 to 629 (PRSMAAARSASAGSRGPN).

It belongs to the protein kinase superfamily. Ser/Thr protein kinase family. CDC5/Polo subfamily. As to quaternary structure, interacts with mex-5, mex-6 and spat-1. Embryos.

Its subcellular location is the cytoplasm. It localises to the cytoskeleton. It is found in the microtubule organizing center. The protein resides in the centrosome. The protein localises to the midbody. Its subcellular location is the nucleus. It localises to the chromosome. It is found in the centromere. The protein resides in the kinetochore. It catalyses the reaction L-seryl-[protein] + ATP = O-phospho-L-seryl-[protein] + ADP + H(+). The enzyme catalyses L-threonyl-[protein] + ATP = O-phospho-L-threonyl-[protein] + ADP + H(+). Required for oocyte nuclear envelope breakdown before entry of oocyte into spermatheca. In meiotic cells, required for spindle dynamics and probably for spindle attachment to the chromosomes. Zygotic role in the development of the germline and nerve cord. In mitotic cells, plays a role in spindle organization and centrosome maturation. Involved in asymmetric nuclear localization of cdc-25.1 during embryogenesis which affects cell division timing. Together with plk-2, regulates cytoplasm polarity in early embryos. May play a minor role in chromosome pairing and synapsis during oocyte meiosis I. In Caenorhabditis elegans, this protein is Serine/threonine-protein kinase plk-1 (plk-1).